We begin with the raw amino-acid sequence, 103 residues long: Insulin (103 aa).

The N-terminal stretch at 1–20 is a signal peptide; sequence IQSLPLLALLALSGPGTSHA. Cystine bridges form between Cys27–Cys89, Cys39–Cys102, and Cys88–Cys93. A propeptide spans 53–80 (c peptide); that stretch reads DAEHPLVNGPLHGEVGDLPFQQEEFEKV.

The protein belongs to the insulin family. In terms of assembly, heterodimer of a B chain and an A chain linked by two disulfide bonds.

The protein resides in the secreted. Functionally, insulin decreases blood glucose concentration. It increases cell permeability to monosaccharides, amino acids and fatty acids. It accelerates glycolysis, the pentose phosphate cycle, and glycogen synthesis in liver. The polypeptide is Insulin (INS) (Selasphorus rufus (Rufous hummingbird)).